A 478-amino-acid chain; its full sequence is Solute carrier family 2, facilitated glucose transporter member 8 (478 aa).

The segment at 1 to 20 (MTPEDQEETQPLLRPPGGSA) is disordered. Residues 1–25 (MTPEDQEETQPLLRPPGGSAPRGRR) lie on the Cytoplasmic side of the membrane. Low complexity predominate over residues 11–20 (PLLRPPGGSA). Positions 12–13 (LL) match the Dileucine internalization motif motif. Residues 26–46 (VFLAAFAAALGPLSFGFALGY) traverse the membrane as a helical segment. The Extracellular segment spans residues 47–70 (SSPAIPSLRRAAPPAPHLDEDAAS). The helical transmembrane segment at 71–91 (WFGAIVTLGAAAGGVLGGWLL) threads the bilayer. At 92-97 (DRAGRK) the chain is on the cytoplasmic side. Residues 98–118 (LSLVLCALPFVAGFAVITAAQ) form a helical membrane-spanning segment. Residues 119–127 (NLWMLLGGR) lie on the Extracellular side of the membrane. A helical membrane pass occupies residues 128–148 (LLTGLACGIASLVAPVYISEI). The Cytoplasmic segment spans residues 149-158 (AYPEVRGLLG). The chain crosses the membrane as a helical span at residues 159-179 (SCVQLMVVTGILLAYLAGWVL). A D-glucose-binding site is contributed by glutamine 162. Residues 180 to 182 (EWR) lie on the Extracellular side of the membrane. A helical transmembrane segment spans residues 183-203 (WLAVLGCVPPSFMLLLMCFMP). Residues 204–257 (ETPRFLLSQHKHQEAMAAMQFLWGYAQGWEEPPLGAQHQDFHVAQLRRPGVYKP) lie on the Cytoplasmic side of the membrane. Residues 258-278 (FIIGISLMAFQQLSGVNAVMF) form a helical membrane-spanning segment. D-glucose-binding positions include 268 to 269 (QQ) and asparagine 274. At 279-293 (YAETIFEEAKFKDSS) the chain is on the extracellular side. The chain crosses the membrane as a helical span at residues 294 to 314 (LASVVVGVIQVLFTATAALIM). Over 315–320 (DRAGRR) the chain is Cytoplasmic. The helical transmembrane segment at 321-341 (LLLTLSGVVMVFSTSAFGTYF) threads the bilayer. Residues 342–368 (KLTEGGPSNSSHVDLPALVSMEAADTN) lie on the Extracellular side of the membrane. Residue asparagine 350 is glycosylated (N-linked (GlcNAc...) asparagine). The helical transmembrane segment at 369–389 (VGLAWLAVGSMCLFIAGFAVG) threads the bilayer. Over 390-405 (WGPIPWLLMSEIFPLH) the chain is Cytoplasmic. Tryptophan 395 contributes to the D-glucose binding site. A helical membrane pass occupies residues 406-426 (VKGVATGVCVLTNWFMAFLVT). The Extracellular segment spans residues 427-439 (KEFSSLMEVLRPY). Residues 440 to 460 (GAFWLASAFCIFGVLFTLACV) form a helical membrane-spanning segment. At 461–478 (PETKGKTLEQITAHFEGR) the chain is on the cytoplasmic side.

Belongs to the major facilitator superfamily. Sugar transporter (TC 2.A.1.1) family. Glucose transporter subfamily. As to quaternary structure, interacts with AP2B1. In terms of tissue distribution, abundantly expressed in testis and more moderately in lung, kidney, spleen, intestine, skeletal muscle, liver and mammary gland.

It localises to the cell membrane. The protein localises to the cytoplasmic vesicle membrane. It carries out the reaction D-glucose(out) = D-glucose(in). The catalysed reaction is D-fructose(out) = D-fructose(in). It catalyses the reaction L-dehydroascorbate(out) = L-dehydroascorbate(in). The enzyme catalyses alpha,alpha-trehalose(in) = alpha,alpha-trehalose(out). Inhibited by cytochalasin B. Insulin-regulated facilitative hexose transporter that mediates the transport of glucose and fructose. Facilitates hepatic influx of dietary trehalose, which in turn inhibits glucose and fructose influx triggering a starvation signal and hepatic autophagy through activation of AMPK and ULK1. Also able to mediate the transport of dehydroascorbate. The polypeptide is Solute carrier family 2, facilitated glucose transporter member 8 (Bos taurus (Bovine)).